We begin with the raw amino-acid sequence, 509 residues long: Maturase K (509 aa).

It belongs to the intron maturase 2 family. MatK subfamily.

The protein resides in the plastid. It is found in the chloroplast. Usually encoded in the trnK tRNA gene intron. Probably assists in splicing its own and other chloroplast group II introns. In Clematis florida (Asian virgin's bower), this protein is Maturase K.